We begin with the raw amino-acid sequence, 314 residues long: Olfactory receptor 1E1 (314 aa).

Residues 1 to 25 are Extracellular-facing; the sequence is MMGQNQTSISDFLLLGLPIQPEQQN. N5 carries an N-linked (GlcNAc...) asparagine glycan. The chain crosses the membrane as a helical span at residues 26–49; the sequence is LCYALFLAMYLTTLLGNLLIIVLI. At 50 to 57 the chain is on the cytoplasmic side; that stretch reads RLDSHLHT. The chain crosses the membrane as a helical span at residues 58-79; that stretch reads PMYLFLSNLSFSDLCFSSVTIP. Residues 80–100 are Extracellular-facing; sequence KLLQNMQNQDPSIPYADCLTQ. C97 and C189 are oxidised to a cystine. The chain crosses the membrane as a helical span at residues 101–120; sequence MYFFLLFGDLESFLLVAMAY. Topologically, residues 121 to 139 are cytoplasmic; the sequence is DRYVAICFPLHYTAIMSPM. Residues 140 to 158 traverse the membrane as a helical segment; sequence LCLSVVALSWVLTTFHAML. The Extracellular segment spans residues 159–195; it reads HTLLMARLCFCADNVIPHFFCDMSALLKLACSDTRVN. A helical transmembrane segment spans residues 196 to 219; the sequence is EWVIFIMGGLILVIPFLLILGSYA. Residues 220 to 236 lie on the Cytoplasmic side of the membrane; the sequence is RIVSSILKVPSSKGICK. A helical transmembrane segment spans residues 237–259; sequence ALSTCGSHLSVVSLFYGTVIGLY. Residues 260–272 are Extracellular-facing; it reads LCPSANSSTLKDT. A helical membrane pass occupies residues 273-292; that stretch reads VMAMIYTVVTPMLNPFIYSL. The Cytoplasmic portion of the chain corresponds to 293 to 314; sequence RNRDMKGALSRVIHQKKTFFSL.

This sequence belongs to the G-protein coupled receptor 1 family.

Its subcellular location is the cell membrane. Odorant receptor. The chain is Olfactory receptor 1E1 (OR1E1) from Pan troglodytes (Chimpanzee).